A 270-amino-acid chain; its full sequence is Putative hydro-lyase ACIAD2519 (270 aa).

The protein belongs to the D-glutamate cyclase family.

The polypeptide is Putative hydro-lyase ACIAD2519 (Acinetobacter baylyi (strain ATCC 33305 / BD413 / ADP1)).